An 85-amino-acid chain; its full sequence is Small ribosomal subunit protein uS17 (85 aa).

It belongs to the universal ribosomal protein uS17 family. Part of the 30S ribosomal subunit.

Functionally, one of the primary rRNA binding proteins, it binds specifically to the 5'-end of 16S ribosomal RNA. The sequence is that of Small ribosomal subunit protein uS17 from Geobacter sulfurreducens (strain ATCC 51573 / DSM 12127 / PCA).